Reading from the N-terminus, the 160-residue chain is MAGFMKNAMSYLGMSDVAEGEDDFEDDVDTGETSFDSDHSVTPMPSSSASASTPSAPREQSNPFQGGRVSRITTIHPKTYDDAQMVGRAIRDGIPVVLNLTGVAEAVAYRIVDFSAGVVFGVRGSIERVTPRVFLLSPAQVNIKVEEPEDKGPAHDLFAD.

A compositionally biased stretch (acidic residues) spans 18 to 30; that stretch reads AEGEDDFEDDVDT. The segment at 18–72 is disordered; it reads AEGEDDFEDDVDTGETSFDSDHSVTPMPSSSASASTPSAPREQSNPFQGGRVSRI. Over residues 45–57 the composition is skewed to low complexity; the sequence is PSSSASASTPSAP.

This sequence belongs to the SepF family. As to quaternary structure, homodimer. Interacts with FtsZ.

It localises to the cytoplasm. Its function is as follows. Cell division protein that is part of the divisome complex and is recruited early to the Z-ring. Probably stimulates Z-ring formation, perhaps through the cross-linking of FtsZ protofilaments. Its function overlaps with FtsA. This is Cell division protein SepF from Bifidobacterium adolescentis (strain ATCC 15703 / DSM 20083 / NCTC 11814 / E194a).